A 310-amino-acid chain; its full sequence is Olfactory receptor 5P55 (310 aa).

At 1–25 (METQNHTTVTEFILLGLTESSTLRV) the chain is on the extracellular side. The N-linked (GlcNAc...) asparagine glycan is linked to Asn5. The chain crosses the membrane as a helical span at residues 26-46 (ILFMVFLGIYTVTLVGNFSII). The Cytoplasmic segment spans residues 47–54 (SLIRSCPQ). Residues 55 to 75 (LHTPMYLFLSHLAFVDIGFST) form a helical membrane-spanning segment. The Extracellular segment spans residues 76-99 (SITPTMFKGFLGNRLVLSVAACIA). Cys97 and Cys189 are joined by a disulfide. Residues 100 to 120 (QFCITVTFGTVECFLLAVMAY) traverse the membrane as a helical segment. Topologically, residues 121–133 (DRYVAICSPLLYS) are cytoplasmic. A helical transmembrane segment spans residues 134–154 (THMSPRICFLLVGASYVGGCV). At 155 to 196 (NSGAFTSCLSILSFCGPNQIDHFFCDFPAVLKLSCSDVSIIG) the chain is on the extracellular side. The helical transmembrane segment at 197–217 (IIPSISAGSIIVITVFVIAVS) threads the bilayer. The Cytoplasmic segment spans residues 218–237 (YAYILITILKMRSTEGRQKA). The chain crosses the membrane as a helical span at residues 238-258 (FSTCTSHLTAVTLYYGTITFI). The Extracellular portion of the chain corresponds to 259 to 271 (YVMPKSNYSTAQN). Asn265 carries an N-linked (GlcNAc...) asparagine glycan. The chain crosses the membrane as a helical span at residues 272–292 (KILSVFYTVVIPMLNPLIYSL). The Cytoplasmic portion of the chain corresponds to 293–310 (RNRDVKEALRKAIIRIFP).

The protein belongs to the G-protein coupled receptor 1 family.

It localises to the cell membrane. In terms of biological role, potential odorant receptor. The protein is Olfactory receptor 5P55 of Mus musculus (Mouse).